The primary structure comprises 68 residues: Sperm-associated antigen 11A (68 aa).

The first 19 residues, Met1–Gly19, serve as a signal peptide directing secretion. 3 disulfide bridges follow: Cys30-Cys59, Cys37-Cys52, and Cys42-Cys60.

This sequence belongs to the beta-defensin family. In terms of tissue distribution, only expressed in epididymis (middle part of the caput).

The protein resides in the secreted. In terms of biological role, has antimicrobial activity against E.coli. Plays a role in the defense response in the male reproductive tract, contributing to sperm maturation, storage and protection. This is Sperm-associated antigen 11A from Rattus norvegicus (Rat).